The sequence spans 187 residues: MNMDHSSHSTMSSSSSMTMTMVFTNSHDTPLFSSAWTPSSSGAYAGTCIFLVVLAIINRCLVAFKASMEHYWFATHLNRRYIAIAGKSSEAGRIDTDPDAKVASLVTAQGVEESVKVVRRVSREPIPWRFSVDLPRAAIFLCITGVSYLLMLAVMTMNVGYFCSVLAGAFLGELAVGRYIQWNEHDH.

The next 2 helical transmembrane spans lie at 44-64 and 137-157; these read YAGTCIFLVVLAIINRCLVAF and AAIFLCITGVSYLLMLAVMTM.

The protein belongs to the copper transporter (Ctr) (TC 1.A.56) family. SLC31A subfamily.

The protein resides in the cell membrane. It catalyses the reaction Cu(2+)(in) = Cu(2+)(out). In terms of biological role, high-affinity copper transporter of plasma membrane that mediates copper uptake under low copper conditions. The mechanism driving the transmembrane transport of copper has still to be determined. Acts as a potential virulence factor. This chain is High-affinity copper transporter ctrA2, found in Aspergillus fumigatus (strain ATCC MYA-4609 / CBS 101355 / FGSC A1100 / Af293) (Neosartorya fumigata).